We begin with the raw amino-acid sequence, 432 residues long: Neuronal pentraxin-1 (432 aa).

The signal sequence occupies residues methionine 1 to alanine 22. The tract at residues glutamate 90–glutamate 128 is disordered. N-linked (GlcNAc...) asparagine glycans are attached at residues asparagine 154 and asparagine 193. Residues aspartate 226–cysteine 428 enclose the Pentraxin (PTX) domain. Cysteine 256 and cysteine 316 are disulfide-bonded. Asparagine 280, glutamate 358, glutamine 359, aspartate 360, and glutamine 370 together coordinate Ca(2+).

Homooligomer or heterooligomer (probably pentamer) with neuronal pentraxin receptor (NPTXR). Ca(2+) is required as a cofactor. Post-translationally, glycosylated. Cerebellum, hippocampus and cerebral cortex.

Its subcellular location is the secreted. It is found in the cytoplasmic vesicle. The protein localises to the secretory vesicle. It localises to the endoplasmic reticulum. May be involved in mediating uptake of synaptic material during synapse remodeling or in mediating the synaptic clustering of AMPA glutamate receptors at a subset of excitatory synapses. This Rattus norvegicus (Rat) protein is Neuronal pentraxin-1 (Nptx1).